Reading from the N-terminus, the 156-residue chain is Ribosomal RNA large subunit methyltransferase H (156 aa).

S-adenosyl-L-methionine contacts are provided by residues Leu-73, Gly-104, and 123–128; that span reads ISSLTL.

Belongs to the RNA methyltransferase RlmH family. As to quaternary structure, homodimer.

The protein resides in the cytoplasm. The catalysed reaction is pseudouridine(1915) in 23S rRNA + S-adenosyl-L-methionine = N(3)-methylpseudouridine(1915) in 23S rRNA + S-adenosyl-L-homocysteine + H(+). In terms of biological role, specifically methylates the pseudouridine at position 1915 (m3Psi1915) in 23S rRNA. The sequence is that of Ribosomal RNA large subunit methyltransferase H from Herminiimonas arsenicoxydans.